The following is a 363-amino-acid chain: Putative replication factor C small subunit L510 (363 aa).

47 to 54 (GPPGTGKT) is a binding site for ATP.

Belongs to the activator 1 small subunits family. RfcS subfamily.

In terms of biological role, part of the RFC clamp loader complex which loads the PCNA sliding clamp onto DNA. The polypeptide is Putative replication factor C small subunit L510 (Acanthamoeba polyphaga mimivirus (APMV)).